The primary structure comprises 427 residues: MWKHVKQVDPEIYEVLVNELKRQEYGLELIASENFASLAVIETMGSMLTNKYAEGYPQKRYYGGCEWVDRAEELAIERAKRLFGAKFANVQPHSGSQANMAVYLALAQPGDTIMGMSLSHGGHLTHGAPVNFSGKIFKVVPYGVNLETETIDYDEVRRLALEHKPKIIVAGGSAYARIIDFKRFREIADEVGAYLMVDMAHFAGLVAAGIHPNPLEYAHVVTSTTHKTLRGPRGGLILTNDPDIAKAVDKTIFPGIQGGPLMHVIAAKAVCFKEAMTEEFKEYQKQVVKNAKKMAEEFQKRGYRIVSGGTDTHLFLVDLTPKDITGKAAEKALESCGITVNKNTIPNEKRSPFVASGIRIGTPAVTTRGMKEEEMEEIAEMIDLVLSNVTDENGTVKPEVREEVSKRVRELCERFPLYRDKIEGVEI.

(6S)-5,6,7,8-tetrahydrofolate contacts are provided by residues Leu118 and 122–124 (GHL). Lys227 is subject to N6-(pyridoxal phosphate)lysine. 351 to 353 (SPF) lines the (6S)-5,6,7,8-tetrahydrofolate pocket.

This sequence belongs to the SHMT family. Homodimer. Pyridoxal 5'-phosphate is required as a cofactor.

The protein localises to the cytoplasm. The catalysed reaction is (6R)-5,10-methylene-5,6,7,8-tetrahydrofolate + glycine + H2O = (6S)-5,6,7,8-tetrahydrofolate + L-serine. It participates in one-carbon metabolism; tetrahydrofolate interconversion. Its pathway is amino-acid biosynthesis; glycine biosynthesis; glycine from L-serine: step 1/1. In terms of biological role, catalyzes the reversible interconversion of serine and glycine with tetrahydrofolate (THF) serving as the one-carbon carrier. This reaction serves as the major source of one-carbon groups required for the biosynthesis of purines, thymidylate, methionine, and other important biomolecules. Also exhibits THF-independent aldolase activity toward beta-hydroxyamino acids, producing glycine and aldehydes, via a retro-aldol mechanism. The protein is Serine hydroxymethyltransferase of Thermotoga petrophila (strain ATCC BAA-488 / DSM 13995 / JCM 10881 / RKU-1).